A 185-amino-acid polypeptide reads, in one-letter code: Probable nicotinate-nucleotide adenylyltransferase (185 aa).

Belongs to the NadD family.

It catalyses the reaction nicotinate beta-D-ribonucleotide + ATP + H(+) = deamido-NAD(+) + diphosphate. It participates in cofactor biosynthesis; NAD(+) biosynthesis; deamido-NAD(+) from nicotinate D-ribonucleotide: step 1/1. Functionally, catalyzes the reversible adenylation of nicotinate mononucleotide (NaMN) to nicotinic acid adenine dinucleotide (NaAD). In Cereibacter sphaeroides (strain ATCC 17025 / ATH 2.4.3) (Rhodobacter sphaeroides), this protein is Probable nicotinate-nucleotide adenylyltransferase.